The primary structure comprises 1070 residues: DNA-directed RNA polymerase subunit beta (1070 aa).

Belongs to the RNA polymerase beta chain family. As to quaternary structure, in plastids the minimal PEP RNA polymerase catalytic core is composed of four subunits: alpha, beta, beta', and beta''. When a (nuclear-encoded) sigma factor is associated with the core the holoenzyme is formed, which can initiate transcription.

The protein resides in the plastid. The catalysed reaction is RNA(n) + a ribonucleoside 5'-triphosphate = RNA(n+1) + diphosphate. Functionally, DNA-dependent RNA polymerase catalyzes the transcription of DNA into RNA using the four ribonucleoside triphosphates as substrates. This is DNA-directed RNA polymerase subunit beta (rpoB) from Cuscuta reflexa (Southern Asian dodder).